The primary structure comprises 457 residues: Argininosuccinate lyase (457 aa).

Belongs to the lyase 1 family. Argininosuccinate lyase subfamily.

It localises to the cytoplasm. The catalysed reaction is 2-(N(omega)-L-arginino)succinate = fumarate + L-arginine. Its pathway is amino-acid biosynthesis; L-arginine biosynthesis; L-arginine from L-ornithine and carbamoyl phosphate: step 3/3. The chain is Argininosuccinate lyase from Shigella boydii serotype 18 (strain CDC 3083-94 / BS512).